Consider the following 1214-residue polypeptide: Receptor-type guanylate cyclase gcy-19 (1214 aa).

The signal sequence occupies residues 1–18 (MEHLIFLLIFGGYSPSIA). The Extracellular segment spans residues 19-517 (QITSSTTTTT…PQTFVDQYGA (499 aa)). N-linked (GlcNAc...) asparagine glycosylation is found at N85, N363, N441, and N464. Residues 518-538 (LVFSIGGVLALAMLFLITCFF) form a helical membrane-spanning segment. The Cytoplasmic segment spans residues 539 to 1214 (YVLRQRKLER…FRRQETLALM (676 aa)). Residues 572-859 (RMSKRSIQSG…KGNLMDHVFN (288 aa)) enclose the Protein kinase domain. One can recognise a Guanylate cyclase domain in the interval 917–1047 (TVFFSDVVKF…DTVNTASRME (131 aa)). A disordered region spans residues 1116-1197 (NSSNMAYNPE…EKAREIHNEE (82 aa)). Residues 1133 to 1142 (DDEDVDDESS) show a composition bias toward acidic residues. Positions 1186-1197 (LEEKAREIHNEE) are enriched in basic and acidic residues.

It belongs to the adenylyl cyclase class-4/guanylyl cyclase family. Expressed asymmetrically in ASE right (ASER) sensory neuron.

It localises to the cell membrane. It carries out the reaction GTP = 3',5'-cyclic GMP + diphosphate. In terms of biological role, guanylate cyclase involved in the production of the second messenger cGMP. The sequence is that of Receptor-type guanylate cyclase gcy-19 from Caenorhabditis briggsae.